We begin with the raw amino-acid sequence, 298 residues long: Pyridoxal 5'-phosphate synthase subunit PdxS (298 aa).

Asp-24 is a binding site for D-ribose 5-phosphate. The active-site Schiff-base intermediate with D-ribose 5-phosphate is the Lys-81. Residue Gly-153 coordinates D-ribose 5-phosphate. Arg-165 contacts D-glyceraldehyde 3-phosphate. D-ribose 5-phosphate is bound by residues Gly-214 and 235-236 (GS).

It belongs to the PdxS/SNZ family. As to quaternary structure, in the presence of PdxT, forms a dodecamer of heterodimers.

It carries out the reaction aldehydo-D-ribose 5-phosphate + D-glyceraldehyde 3-phosphate + L-glutamine = pyridoxal 5'-phosphate + L-glutamate + phosphate + 3 H2O + H(+). Its pathway is cofactor biosynthesis; pyridoxal 5'-phosphate biosynthesis. Functionally, catalyzes the formation of pyridoxal 5'-phosphate from ribose 5-phosphate (RBP), glyceraldehyde 3-phosphate (G3P) and ammonia. The ammonia is provided by the PdxT subunit. Can also use ribulose 5-phosphate and dihydroxyacetone phosphate as substrates, resulting from enzyme-catalyzed isomerization of RBP and G3P, respectively. This Halalkalibacterium halodurans (strain ATCC BAA-125 / DSM 18197 / FERM 7344 / JCM 9153 / C-125) (Bacillus halodurans) protein is Pyridoxal 5'-phosphate synthase subunit PdxS.